Reading from the N-terminus, the 173-residue chain is MERKLSQRAGNTFKGFTLVEVLITLAIISLVFSLILISFQRATFFTFGAKKEAERLKSEALLFWELQRSLAGAKKLKINQGKELFLITSGGSLYRGVVKKGFIHKDGWLYLYEFPYPSGSIDFYEEEKLVKLAKLDDFKVFALDSLGKHENYEGLPPFVIVELNSKEFTFKVR.

Residues 1 to 15 (MERKLSQRAGNTFKG) constitute a propeptide, leader sequence. Phe-16 bears the N-methylphenylalanine mark. The chain crosses the membrane as a helical span at residues 16–37 (FTLVEVLITLAIISLVFSLILI).

It localises to the membrane. This is an uncharacterized protein from Aquifex aeolicus (strain VF5).